Consider the following 431-residue polypeptide: uncharacterized protein (431 aa).

2 helical membrane passes run Leu-42–Leu-62 and Val-74–Leu-94. N-linked (GlcNAc...) asparagine; by host glycosylation occurs at Asn-105. 5 helical membrane passes run Leu-111–Ile-131, Ala-153–Pro-173, Met-202–Tyr-222, Val-236–Leu-256, and Ala-279–Phe-299.

It localises to the membrane. This is an uncharacterized protein from Homo sapiens (Human).